The chain runs to 451 residues: GTPase Der (451 aa).

2 consecutive EngA-type G domains span residues 5–170 and 186–359; these read PVVA…VAPP and IKLA…AAAF. Residues 11–18, 58–62, 122–125, 192–199, 239–243, and 304–307 contribute to the GTP site; these read GRPNVGKS, DTGGF, NKAE, DTAGL, and NKWD. The 85-residue stretch at 360-444 folds into the KH-like domain; sequence AKLSTPRLTR…PLRIEFKSSR (85 aa).

Belongs to the TRAFAC class TrmE-Era-EngA-EngB-Septin-like GTPase superfamily. EngA (Der) GTPase family. Associates with the 50S ribosomal subunit.

GTPase that plays an essential role in the late steps of ribosome biogenesis. This chain is GTPase Der, found in Bordetella bronchiseptica (strain ATCC BAA-588 / NCTC 13252 / RB50) (Alcaligenes bronchisepticus).